A 149-amino-acid polypeptide reads, in one-letter code: Glycophorin-A (149 aa).

Positions 1–19 (MYGKIIFVLLLSAIVSISA) are cleaved as a signal peptide. Residues 20-90 (SSTTEVAMHT…QLVHRFSEPE (71 aa)) are Extracellular-facing. S21 is a glycosylation site (O-linked (GalNAc...) serine). O-linked (GalNAc...) threonine glycans are attached at residues T22, T23, and T29. S30 carries O-linked (GalNAc...) serine glycosylation. O-linked (GalNAc...) threonine glycosylation is present at T31. O-linked (GalNAc...) serine glycosylation is present at S32. O-linked (GalNAc...) threonine glycosylation occurs at T35. O-linked (GalNAc...) serine glycans are attached at residues S37 and S40. O-linked (GalNAc...) threonine glycosylation occurs at T43. S44 is a glycosylation site (O-linked (GalNAc...) serine). T51 and T55 each carry an O-linked (GalNAc...) threonine glycan. S62 carries O-linked (GalNAc...) serine glycosylation. Residue T68 is glycosylated (O-linked (GalNAc...) threonine). The chain crosses the membrane as a helical span at residues 91–113 (ITLIIFGVMAGVIGTILLIYYSI). Residues 114–149 (RRLIKKSPSDVKPLPSPDTDVPLSSVEIENPETSDQ) lie on the Cytoplasmic side of the membrane. Residues 122 to 149 (SDVKPLPSPDTDVPLSSVEIENPETSDQ) are disordered. Phosphoserine is present on residues S137 and S147.

This sequence belongs to the glycophorin-A family. As to quaternary structure, homodimer. Component of the ankyrin-1 complex in the erythrocyte, composed of ANK1, RHCE, RHAG, SLC4A1, EPB42, GYPA, GYPB and AQP1. Interacts with SLC4A1; a GYPA monomer is bound at each end of the SLC4A1 dimer forming a heterotetramer.

Its subcellular location is the cell membrane. Functionally, component of the ankyrin-1 complex, a multiprotein complex involved in the stability and shape of the erythrocyte membrane. Glycophorin A is the major intrinsic membrane protein of the erythrocyte. The N-terminal glycosylated segment, which lies outside the erythrocyte membrane, has MN blood group receptors. Appears to be important for the function of SLC4A1 and is required for high activity of SLC4A1. May be involved in translocation of SLC4A1 to the plasma membrane. The polypeptide is Glycophorin-A (Pan troglodytes (Chimpanzee)).